A 149-amino-acid polypeptide reads, in one-letter code: Large ribosomal subunit protein uL15 (149 aa).

Basic residues predominate over residues 1 to 29 (MVSHLKKTRKLRGHVSHGHGRVGKHRKGG). The tract at residues 1-38 (MVSHLKKTRKLRGHVSHGHGRVGKHRKGGCRGGRGKAG) is disordered.

The protein belongs to the universal ribosomal protein uL15 family.

The polypeptide is Large ribosomal subunit protein uL15 (RPL27A) (Tetrahymena thermophila).